A 184-amino-acid polypeptide reads, in one-letter code: Probable chemoreceptor glutamine deamidase CheD (184 aa).

This sequence belongs to the CheD family.

It catalyses the reaction L-glutaminyl-[protein] + H2O = L-glutamyl-[protein] + NH4(+). In terms of biological role, probably deamidates glutamine residues to glutamate on methyl-accepting chemotaxis receptors (MCPs), playing an important role in chemotaxis. This chain is Probable chemoreceptor glutamine deamidase CheD, found in Rhizobium leguminosarum bv. trifolii (strain WSM2304).